Reading from the N-terminus, the 100-residue chain is UPF0235 protein NE0395 (100 aa).

The protein belongs to the UPF0235 family.

This is UPF0235 protein NE0395 from Nitrosomonas europaea (strain ATCC 19718 / CIP 103999 / KCTC 2705 / NBRC 14298).